The following is a 338-amino-acid chain: Heat-inducible transcription repressor HrcA (338 aa).

It belongs to the HrcA family.

Functionally, negative regulator of class I heat shock genes (grpE-dnaK-dnaJ and groELS operons). Prevents heat-shock induction of these operons. The chain is Heat-inducible transcription repressor HrcA from Polaromonas sp. (strain JS666 / ATCC BAA-500).